The sequence spans 570 residues: MLSRLMSGSSRSLEREYSCTVRLLDDSEYTCTIQRDAKGQYLFDLLCHHLNLLEKDYFGIRFVDPDKQRHWLEFTKSVVKQLRSQPPFTMCFRVKFYPADPAALKEEITRYLVFLQIKRDLYHGRLLCKTSDAALLAAYILQAEIGDYDSGKHPEGYSSKFQFFPKHSEKLERKIAEIHKTELSGQTPATSELNFLRKAQTLETYGVDPHPCKDVSGNAAFLAFTPFGFVVLQGNKRVHFIKWNEVTKLKFEGKTFYLYVSQKEEKKIILTYFAPTPEACKHLWKCGIENQAFYKLEKSSQVRTVSSSNLFFKGSRFRYSGRVAKEVMESSAKIKREPPEIHRAGMVPSRSCPSITHGPRLSSVPRTRRRAVHISIMEGLESLRDSAHSTPVRSTSHGDTFLPHVRSSRTDSNERVAVIADEAYSPADSVLPTPVAEHSLELMLLSRQINGATCSIEEEKESEASTPTATEVEALGGELRALCQGHSGPEEEQVNKFVLSVLRLLLVTMGLLFVLLLLLIILTESDLDIAFFRDIRQTPEFEQFHYQYFCPLRRWFACKIRSVVSLLIDT.

In terms of domain architecture, FERM spans 17-298 (YSCTVRLLDD…ENQAFYKLEK (282 aa)). The segment at 308 to 353 (SNLFFKGSRFRYSGRVAKEVMESSAKIKREPPEIHRAGMVPSRSCP) is interaction with ROCK1. The interval 344–367 (AGMVPSRSCPSITHGPRLSSVPRT) is disordered. Phosphoserine is present on serine 375. The segment at 385-407 (DSAHSTPVRSTSHGDTFLPHVRS) is disordered. Residues 388–398 (HSTPVRSTSHG) show a composition bias toward polar residues. The chain crosses the membrane as a helical span at residues 504 to 524 (LLLVTMGLLFVLLLLLIILTE).

Interacts with CTNND1. Interacts with ITGB5 (via cytoplasmic domain) and ROCK1.

It is found in the membrane. It localises to the cell junction. Its subcellular location is the adherens junction. Functionally, may be involved in regulation of cell migration. May regulate cell-matrix interactions via its interaction with ITGB5 and modifying ITGB5 cytoplasmic tail interactions such as with FERMT2 and TLN1. May regulate ROCK1 kinase activity possibly involved in regulation of actin stress fiber formation. The protein is FERM domain-containing protein 5 (FRMD5) of Homo sapiens (Human).